The chain runs to 415 residues: Beta-1,4-glucuronyltransferase 1 (415 aa).

Residues 1–8 are Cytoplasmic-facing; it reads MQMSYAIR. Residues 9–36 traverse the membrane as a helical; Signal-anchor for type II membrane protein segment; the sequence is CAFYQLLLAALMLVAMLQLLYLSLLSGL. The Lumenal portion of the chain corresponds to 37–415; the sequence is HGQEEQDQYF…AKYPNSPRRC (379 aa). Residue N204 is glycosylated (N-linked (GlcNAc...) asparagine). Mn(2+) is bound by residues D227 and D229. A glycan (N-linked (GlcNAc...) asparagine) is linked at N300.

Belongs to the glycosyltransferase 49 family. Interacts with LARGE1 and LARGE2. The cofactor is Mn(2+). In terms of tissue distribution, in the adult, highly expressed in heart, brain, skeletal muscle and kidney and to a lesser extent in placenta, pancreas, spleen, prostate, testis, ovary, small intestine and colon. Very weak expression in lung, liver, thymus and peripheral blood leukocytes. In fetal highly expressed in brain and kidney and to a lesser extent in lung and liver.

Its subcellular location is the golgi apparatus membrane. It catalyses the reaction 3-O-[beta-D-Xyl-(1-&gt;4)-Rib-ol-P-Rib-ol-P-3-beta-D-GalNAc-(1-&gt;3)-beta-D-GlcNAc-(1-&gt;4)-(O-6-P-alpha-D-Man)]-Thr-[protein] + UDP-alpha-D-glucuronate = 3-O-[beta-D-GlcA-(1-&gt;3)-beta-D-Xyl-(1-&gt;4)-Rib-ol-P-Rib-ol-P-3-beta-D-GalNAc-(1-&gt;3)-beta-D-GlcNAc-(1-&gt;4)-(O-6-P-alpha-D-Man)]-Thr-[protein] + UDP + H(+). It functions in the pathway protein modification; protein glycosylation. In terms of biological role, beta-1,4-glucuronyltransferase involved in O-mannosylation of alpha-dystroglycan (DAG1). Transfers a glucuronic acid (GlcA) residue onto a xylose (Xyl) acceptor to produce the glucuronyl-beta-1,4-xylose-beta disaccharide primer, which is further elongated by LARGE1, during synthesis of phosphorylated O-mannosyl glycan. Phosphorylated O-mannosyl glycan is a carbohydrate structure present in alpha-dystroglycan (DAG1), which is required for binding laminin G-like domain-containing extracellular proteins with high affinity. Required for axon guidance; via its function in O-mannosylation of alpha-dystroglycan (DAG1). In Homo sapiens (Human), this protein is Beta-1,4-glucuronyltransferase 1.